The sequence spans 70 residues: Small ribosomal subunit protein bS21C (70 aa).

It belongs to the bacterial ribosomal protein bS21 family.

In Burkholderia pseudomallei (strain 1710b), this protein is Small ribosomal subunit protein bS21C.